Consider the following 225-residue polypeptide: Small ribosomal subunit protein eS1 (225 aa).

Acidic residues predominate over residues 206 to 216 (PVEEPAAEEVA). The segment at 206-225 (PVEEPAAEEVAEAPAAETQE) is disordered.

It belongs to the eukaryotic ribosomal protein eS1 family.

This chain is Small ribosomal subunit protein eS1, found in Methanococcus maripaludis (strain C5 / ATCC BAA-1333).